The primary structure comprises 396 residues: S-adenosylmethionine synthase (396 aa).

Residue H16 participates in ATP binding. Residue D18 participates in Mg(2+) binding. E44 serves as a coordination point for K(+). L-methionine-binding residues include E57 and Q100. The interval 100–110 is flexible loop; sequence QSVDIAQGVDR. Residues 165–167, D240, 246–247, A263, and K267 each bind ATP; these read DAK and RK. D240 serves as a coordination point for L-methionine. K271 contributes to the L-methionine binding site.

It belongs to the AdoMet synthase family. In terms of assembly, homotetramer; dimer of dimers. Mg(2+) is required as a cofactor. Requires K(+) as cofactor.

It localises to the cytoplasm. It carries out the reaction L-methionine + ATP + H2O = S-adenosyl-L-methionine + phosphate + diphosphate. The protein operates within amino-acid biosynthesis; S-adenosyl-L-methionine biosynthesis; S-adenosyl-L-methionine from L-methionine: step 1/1. Its function is as follows. Catalyzes the formation of S-adenosylmethionine (AdoMet) from methionine and ATP. The overall synthetic reaction is composed of two sequential steps, AdoMet formation and the subsequent tripolyphosphate hydrolysis which occurs prior to release of AdoMet from the enzyme. The sequence is that of S-adenosylmethionine synthase from Pseudomonas savastanoi pv. phaseolicola (strain 1448A / Race 6) (Pseudomonas syringae pv. phaseolicola (strain 1448A / Race 6)).